The sequence spans 1574 residues: Plexin-C1 (1574 aa).

The N-terminal stretch at 1 to 34 (MEVSRRKTPPRPPYPAAPLPLIAYLLALAAPARG) is a signal peptide. One can recognise a Sema domain in the interval 35–452 (ADEPVWRSEQ…AGKEVRRIPV (418 aa)). Residues 35–950 (ADEPVWRSEQ…YVEQESVPST (916 aa)) lie on the Extracellular side of the membrane. Cys-64 and Cys-87 are disulfide-bonded. N-linked (GlcNAc...) asparagine glycans are attached at residues Asn-86, Asn-143, and Asn-149. Cysteines 156 and 194 form a disulfide. Asn-252 carries N-linked (GlcNAc...) asparagine glycosylation. Cys-283 and Cys-329 are joined by a disulfide. N-linked (GlcNAc...) asparagine glycans are attached at residues Asn-386 and Asn-407. 4 disulfides stabilise this stretch: Cys-455–Cys-472, Cys-461–Cys-506, Cys-464–Cys-481, and Cys-475–Cys-487. N-linked (GlcNAc...) asparagine glycans are attached at residues Asn-694, Asn-773, and Asn-802. The chain crosses the membrane as a helical span at residues 951 to 971 (WYFLIALPILLAIVIVVAVVV). Over 972–1574 (TRYKSKELSR…FDEKKKCKWM (603 aa)) the chain is Cytoplasmic. Ser-984 is modified (phosphoserine).

Belongs to the plexin family. As to quaternary structure, monomer. Homodimer. Interacts with SEMA7A. Detected on dendritic cells, skin Langerhans cells and neutrophils (at protein level).

The protein resides in the membrane. Functionally, receptor for SEMA7A, for vaccinia virus semaphorin A39R and for herpesvirus Sema protein. Binding of semaphorins triggers cellular responses leading to the rearrangement of the cytoskeleton and to secretion of IL6 and IL8. The chain is Plexin-C1 (Plxnc1) from Mus musculus (Mouse).